An 891-amino-acid polypeptide reads, in one-letter code: Valine--tRNA ligase (891 aa).

Positions 43–53 (PFTSGTLHLGH) match the 'HIGH' region motif. Positions 536-540 (KMSKS) match the 'KMSKS' region motif. Residue lysine 539 participates in ATP binding.

Belongs to the class-I aminoacyl-tRNA synthetase family. ValS type 2 subfamily.

The protein localises to the cytoplasm. The enzyme catalyses tRNA(Val) + L-valine + ATP = L-valyl-tRNA(Val) + AMP + diphosphate. Catalyzes the attachment of valine to tRNA(Val). As ValRS can inadvertently accommodate and process structurally similar amino acids such as threonine, to avoid such errors, it has a 'posttransfer' editing activity that hydrolyzes mischarged Thr-tRNA(Val) in a tRNA-dependent manner. The chain is Valine--tRNA ligase from Pyrococcus abyssi (strain GE5 / Orsay).